The primary structure comprises 156 residues: Small ribosomal subunit protein uS7 (156 aa).

Belongs to the universal ribosomal protein uS7 family. As to quaternary structure, part of the 30S ribosomal subunit. Contacts proteins S9 and S11.

Functionally, one of the primary rRNA binding proteins, it binds directly to 16S rRNA where it nucleates assembly of the head domain of the 30S subunit. Is located at the subunit interface close to the decoding center, probably blocks exit of the E-site tRNA. The chain is Small ribosomal subunit protein uS7 from Rhizobium etli (strain ATCC 51251 / DSM 11541 / JCM 21823 / NBRC 15573 / CFN 42).